The chain runs to 228 residues: 7-cyano-7-deazaguanine synthase (228 aa).

Residue 9–19 (LSGGPDSTTVL) coordinates ATP. The Zn(2+) site is built by Cys-193, Cys-203, Cys-206, and Cys-209.

It belongs to the QueC family. It depends on Zn(2+) as a cofactor.

The enzyme catalyses 7-carboxy-7-deazaguanine + NH4(+) + ATP = 7-cyano-7-deazaguanine + ADP + phosphate + H2O + H(+). Its pathway is purine metabolism; 7-cyano-7-deazaguanine biosynthesis. Functionally, catalyzes the ATP-dependent conversion of 7-carboxy-7-deazaguanine (CDG) to 7-cyano-7-deazaguanine (preQ(0)). The chain is 7-cyano-7-deazaguanine synthase from Rickettsia africae (strain ESF-5).